The sequence spans 91 residues: MQDIPREQSLIEYPSAFPIKVMGAHVPGFLEAIVEIALRFDPAFAPDSVEQRPSKAGNYLGLTITVTATSRDQLDALYRELSGHPMVKIVL.

This sequence belongs to the UPF0250 family.

The sequence is that of UPF0250 protein Lcho_4239 from Leptothrix cholodnii (strain ATCC 51168 / LMG 8142 / SP-6) (Leptothrix discophora (strain SP-6)).